The sequence spans 706 residues: mRNA (2'-O-methyladenosine-N(6)-)-methyltransferase (706 aa).

The tract at residues M1–V34 is disordered. Residues L16 to C29 are compositionally biased toward polar residues. S30 carries the post-translational modification Phosphoserine. In terms of domain architecture, WW spans E43–L77. Residues G88–P148 form a disordered region. Positions K109–R113 match the Nuclear localization signal motif. S116 is modified (phosphoserine). The segment covering I132–I147 has biased composition (low complexity). Phosphothreonine is present on T152. Substrate-binding residues include R234 and R264. N552–F555 is a binding site for S-adenosyl-L-methionine. Substrate contacts are provided by residues E557 and W587–P591. S-adenosyl-L-methionine is bound at residue F613–H615. The disordered stretch occupies residues T663–T706. The Nuclear localization signal motif lies at Q668–S686. Residues S675 to S686 are compositionally biased toward low complexity. Residues E687–T706 show a composition bias toward basic and acidic residues.

The protein belongs to the CAPAM family. Interacts with POLR2A; interacts with the phosphorylated C-terminal domain (CTD) of POLR2A.

It localises to the nucleus. The enzyme catalyses a 5'-end (N(7)-methyl 5'-triphosphoguanosine)-(2'-O-methyladenosine) in mRNA + S-adenosyl-L-methionine = a 5'-end (N(7)-methyl 5'-triphosphoguanosine)-(N(6),2'-O-dimethyladenosine) in mRNA + S-adenosyl-L-homocysteine + H(+). Its activity is regulated as follows. Cap-specific adenosine methyltransferase activity is inhibited by zinc. Its function is as follows. Cap-specific adenosine methyltransferase that catalyzes formation of N(6),2'-O-dimethyladenosine cap (m6A(m)) by methylating the adenosine at the second transcribed position of capped mRNAs. Recruited to the early elongation complex of RNA polymerase II (RNAPII) via interaction with POLR2A and mediates formation of m6A(m) co-transcriptionally. This Mus musculus (Mouse) protein is mRNA (2'-O-methyladenosine-N(6)-)-methyltransferase.